The primary structure comprises 781 residues: MARASTTPTTRTDPAALPSRIGRLLGEVRWFLLLAVTIAFLTILLSYNKADPGWSHASQVDDVRNLGGRVGAWFADVLLFVFGASAYWWALLLLRRVWRGWRELMSDERVPRAATPRVDAGVTWFGFALILSASMGLEAIRMHTLHMKLPRAPGGVLGDLIGGSLQHALGFTGGTLLLLLMFTVGLSLFFHFSWLNLAEQIGAGVETLFVGFKTRRENKQDRAIGEAAKVEREEVVETRRVRIEEAPPVQIVRPAAVVKSERVEREKQQPLFVDIQDSDLPALALLDAVPPAQETVSAETLEFTSRLIEKKLKDFGVEVTVVAAYPGPVITRYEIEPATGVKGSQIVNLAKDLARSLSLVSVRVVETIPGKNCMGLELPNPKRQAVRLAEILGSQVYNESASQLTMALGKDIAGKPVVADLAKMPHCMVAGTTGSGKSVGINAMILSLLYKARADAVRLILIDPKMLELSIYEGIPHLLCPVVTDMRQAGHALNWAVGEMERRYKLMSKMGVRNLAGFNKKIEEAAAREEKIHNPFSLTPDAPEPLDKLPMIVIVIDELADLMMVVGKKVEELIARIAQKARAAGIHLVLATQRPSVDVITGLIKANVPTRIAFQVSSKIDSRTILDQQGAEALLGMGDMLYLAPGTGLPVRVHGAFVSDDEVHRVVENLKSQGEPNYIEGLLEGGTADGEGGGDGFGGGAGLAGGGAGEADPLYDQAVDVVLKNRRASISLVQRHLRIGYNRAARLLEDMEKAGLVSAMSGNGNREILAPNRNGNVVEEE.

4 helical membrane-spanning segments follow: residues Leu24–Leu44, Phe74–Leu94, Ala120–Ile140, and Gly170–Phe190. The Cytoplasmic portion of the chain corresponds to His191–Glu781. A FtsK domain is found at Gly414–Arg623. Position 434 to 439 (Gly434 to Val439) interacts with ATP.

Belongs to the FtsK/SpoIIIE/SftA family. Homohexamer. Forms a ring that surrounds DNA.

Its subcellular location is the cell inner membrane. Essential cell division protein that coordinates cell division and chromosome segregation. The N-terminus is involved in assembly of the cell-division machinery. The C-terminus functions as a DNA motor that moves dsDNA in an ATP-dependent manner towards the dif recombination site, which is located within the replication terminus region. Translocation stops specifically at Xer-dif sites, where FtsK interacts with the Xer recombinase, allowing activation of chromosome unlinking by recombination. FtsK orienting polar sequences (KOPS) guide the direction of DNA translocation. FtsK can remove proteins from DNA as it translocates, but translocation stops specifically at XerCD-dif site, thereby preventing removal of XerC and XerD from dif. This Ralstonia nicotianae (strain ATCC BAA-1114 / GMI1000) (Ralstonia solanacearum) protein is DNA translocase FtsK 2 (ftsK2).